Consider the following 586-residue polypeptide: Aspartate--tRNA ligase (586 aa).

Glutamate 171 contributes to the L-aspartate binding site. The interval glutamine 195–lysine 198 is aspartate. An L-aspartate-binding site is contributed by arginine 217. ATP-binding positions include arginine 217–glutamate 219 and glutamine 226. L-aspartate is bound at residue histidine 448. Glutamate 482 provides a ligand contact to ATP. Arginine 489 is an L-aspartate binding site. Residue glycine 534 to arginine 537 coordinates ATP.

The protein belongs to the class-II aminoacyl-tRNA synthetase family. Type 1 subfamily. In terms of assembly, homodimer.

The protein localises to the cytoplasm. It carries out the reaction tRNA(Asp) + L-aspartate + ATP = L-aspartyl-tRNA(Asp) + AMP + diphosphate. Its function is as follows. Catalyzes the attachment of L-aspartate to tRNA(Asp) in a two-step reaction: L-aspartate is first activated by ATP to form Asp-AMP and then transferred to the acceptor end of tRNA(Asp). The sequence is that of Aspartate--tRNA ligase from Buchnera aphidicola subsp. Acyrthosiphon pisum (strain 5A).